The primary structure comprises 152 residues: Xanthine-guanine phosphoribosyltransferase (152 aa).

5-phospho-alpha-D-ribose 1-diphosphate is bound by residues 37–38 (RG), Arg69, and 88–96 (DDLVDTGGT). Arg69 contributes to the GMP binding site. Position 89 (Asp89) interacts with Mg(2+). Guanine contacts are provided by Asp92 and Ile135. Xanthine contacts are provided by Asp92 and Ile135. GMP-binding positions include 92-96 (DTGGT) and 134-135 (WI).

It belongs to the purine/pyrimidine phosphoribosyltransferase family. XGPT subfamily. Homotetramer. It depends on Mg(2+) as a cofactor.

The protein localises to the cell inner membrane. It catalyses the reaction GMP + diphosphate = guanine + 5-phospho-alpha-D-ribose 1-diphosphate. It carries out the reaction XMP + diphosphate = xanthine + 5-phospho-alpha-D-ribose 1-diphosphate. The catalysed reaction is IMP + diphosphate = hypoxanthine + 5-phospho-alpha-D-ribose 1-diphosphate. It participates in purine metabolism; GMP biosynthesis via salvage pathway; GMP from guanine: step 1/1. Its pathway is purine metabolism; XMP biosynthesis via salvage pathway; XMP from xanthine: step 1/1. In terms of biological role, purine salvage pathway enzyme that catalyzes the transfer of the ribosyl-5-phosphate group from 5-phospho-alpha-D-ribose 1-diphosphate (PRPP) to the N9 position of the 6-oxopurines guanine and xanthine to form the corresponding ribonucleotides GMP (guanosine 5'-monophosphate) and XMP (xanthosine 5'-monophosphate), with the release of PPi. To a lesser extent, also acts on hypoxanthine. The polypeptide is Xanthine-guanine phosphoribosyltransferase (Salmonella choleraesuis (strain SC-B67)).